The sequence spans 363 residues: tRNA(Met) cytidine acetate ligase (363 aa).

Residues 7–20 (IAEFNPFHNGHKYL), Gly-96, Asn-152, and Arg-175 each bind ATP.

Belongs to the TmcAL family.

It localises to the cytoplasm. The enzyme catalyses cytidine(34) in elongator tRNA(Met) + acetate + ATP = N(4)-acetylcytidine(34) in elongator tRNA(Met) + AMP + diphosphate. In terms of biological role, catalyzes the formation of N(4)-acetylcytidine (ac(4)C) at the wobble position of elongator tRNA(Met), using acetate and ATP as substrates. First activates an acetate ion to form acetyladenylate (Ac-AMP) and then transfers the acetyl group to tRNA to form ac(4)C34. This is tRNA(Met) cytidine acetate ligase from Streptococcus gordonii (strain Challis / ATCC 35105 / BCRC 15272 / CH1 / DL1 / V288).